We begin with the raw amino-acid sequence, 947 residues long: Coiled-coil domain-containing protein 39 (947 aa).

4 coiled-coil regions span residues 16–194 (AIPV…TLDN), 221–402 (QELI…KELL), 471–522 (KVNT…TEKI), and 582–813 (VLTL…IRSG). Low complexity-rich tracts occupy residues 866–911 (SLPS…VSSP) and 926–947 (SPRGSQPSSAGSSRSSSKCKSP). Positions 866-947 (SLPSPSSTPS…SRSSSKCKSP (82 aa)) are disordered.

Belongs to the CCDC39 family.

The protein localises to the cytoplasm. Its subcellular location is the cytoskeleton. It localises to the cilium axoneme. In terms of biological role, required for assembly of dynein regulatory complex (DRC) and inner dynein arm (IDA) complexes, which are responsible for ciliary beat regulation, thereby playing a central role in motility in cilia and flagella. Probably acts together with ccdc40 to form a molecular ruler that determines the 96 nanometer (nm) repeat length and arrangements of components in cilia and flagella. Not required for outer dynein arm complexes assembly. This chain is Coiled-coil domain-containing protein 39 (ccdc39), found in Danio rerio (Zebrafish).